The sequence spans 488 residues: Protein nucleotidyltransferase YdiU (488 aa).

ATP contacts are provided by Gly91, Gly93, Arg94, Lys114, Asp126, Gly127, Arg177, and Arg184. Asp253 (proton acceptor) is an active-site residue. Positions 254 and 263 each coordinate Mg(2+). Asp263 lines the ATP pocket.

Belongs to the SELO family. Mg(2+) serves as cofactor. Requires Mn(2+) as cofactor.

It carries out the reaction L-seryl-[protein] + ATP = 3-O-(5'-adenylyl)-L-seryl-[protein] + diphosphate. It catalyses the reaction L-threonyl-[protein] + ATP = 3-O-(5'-adenylyl)-L-threonyl-[protein] + diphosphate. The catalysed reaction is L-tyrosyl-[protein] + ATP = O-(5'-adenylyl)-L-tyrosyl-[protein] + diphosphate. The enzyme catalyses L-histidyl-[protein] + UTP = N(tele)-(5'-uridylyl)-L-histidyl-[protein] + diphosphate. It carries out the reaction L-seryl-[protein] + UTP = O-(5'-uridylyl)-L-seryl-[protein] + diphosphate. It catalyses the reaction L-tyrosyl-[protein] + UTP = O-(5'-uridylyl)-L-tyrosyl-[protein] + diphosphate. In terms of biological role, nucleotidyltransferase involved in the post-translational modification of proteins. It can catalyze the addition of adenosine monophosphate (AMP) or uridine monophosphate (UMP) to a protein, resulting in modifications known as AMPylation and UMPylation. This is Protein nucleotidyltransferase YdiU from Bacillus thuringiensis subsp. konkukian (strain 97-27).